Here is a 318-residue protein sequence, read N- to C-terminus: MTVITIAKRGLPKLTTSTSSTTTASSSSTITSVASSSSSLPLLSNSTSSSIIPSITPPSRNGNPYILDSGDMPNGTVFIXVGGIAGVIFLAILLWWVITTYSSHRLTRSVQDYESKMFSTQHTQFYGDSPYMDYPAKENFQDQVHISESDISPGNKDESVKDALVSHTNNEKPFLSNFERPLSSLVSESNRNSLFISPTGDILYKTRLSKLYQESPRLLQKPVIMTSDNVSTNSLVSTISSSSASSLDNGNEKEVGEDIRKPAKIASSPSRKLLNSPESDGSVNRNHSKGNLLVVQSKRKPTPSTYLEHMLEGKEQDE.

Residues Phe-78–Ile-98 traverse the membrane as a helical segment. Ser-129 bears the Phosphoserine mark. A compositionally biased stretch (low complexity) spans Thr-238 to Leu-247. The interval Thr-238–Glu-318 is disordered. Positions Gly-250–Lys-261 are enriched in basic and acidic residues. Over residues Ser-276–Arg-285 the composition is skewed to polar residues. A phosphoserine mark is found at Ser-279, Ser-282, and Ser-288. Basic and acidic residues predominate over residues His-309 to Glu-318. Lys-314 is covalently cross-linked (Glycyl lysine isopeptide (Lys-Gly) (interchain with G-Cter in ubiquitin)).

Belongs to the PRM5 family.

The protein localises to the membrane. In Saccharomyces cerevisiae (strain FostersO) (Baker's yeast), this protein is Pheromone-regulated membrane protein 5 (PRM5).